The sequence spans 914 residues: Isoleucine--tRNA ligase (914 aa).

Residues Pro64–His74 carry the 'HIGH' region motif. Glu557 serves as a coordination point for L-isoleucyl-5'-AMP. The 'KMSKS' region motif lies at Pro598–Ser602. Lys601 lines the ATP pocket. Residues Cys889, Cys892, Cys906, and Cys909 each contribute to the Zn(2+) site.

Belongs to the class-I aminoacyl-tRNA synthetase family. IleS type 1 subfamily. As to quaternary structure, monomer. Zn(2+) serves as cofactor.

The protein localises to the cytoplasm. The enzyme catalyses tRNA(Ile) + L-isoleucine + ATP = L-isoleucyl-tRNA(Ile) + AMP + diphosphate. Functionally, catalyzes the attachment of isoleucine to tRNA(Ile). As IleRS can inadvertently accommodate and process structurally similar amino acids such as valine, to avoid such errors it has two additional distinct tRNA(Ile)-dependent editing activities. One activity is designated as 'pretransfer' editing and involves the hydrolysis of activated Val-AMP. The other activity is designated 'posttransfer' editing and involves deacylation of mischarged Val-tRNA(Ile). The polypeptide is Isoleucine--tRNA ligase (Leptospira interrogans serogroup Icterohaemorrhagiae serovar Lai (strain 56601)).